The sequence spans 209 residues: Thiamine-phosphate synthase (209 aa).

Residues 40-44 (QLREK) and Asn-72 each bind 4-amino-2-methyl-5-(diphosphooxymethyl)pyrimidine. Residues Asp-73 and Asp-92 each contribute to the Mg(2+) site. Ser-111 is a binding site for 4-amino-2-methyl-5-(diphosphooxymethyl)pyrimidine. 137-139 (TNS) provides a ligand contact to 2-[(2R,5Z)-2-carboxy-4-methylthiazol-5(2H)-ylidene]ethyl phosphate. Residue Lys-140 participates in 4-amino-2-methyl-5-(diphosphooxymethyl)pyrimidine binding. Residues Gly-167 and 187-188 (IS) contribute to the 2-[(2R,5Z)-2-carboxy-4-methylthiazol-5(2H)-ylidene]ethyl phosphate site.

The protein belongs to the thiamine-phosphate synthase family. It depends on Mg(2+) as a cofactor.

It carries out the reaction 2-[(2R,5Z)-2-carboxy-4-methylthiazol-5(2H)-ylidene]ethyl phosphate + 4-amino-2-methyl-5-(diphosphooxymethyl)pyrimidine + 2 H(+) = thiamine phosphate + CO2 + diphosphate. The enzyme catalyses 2-(2-carboxy-4-methylthiazol-5-yl)ethyl phosphate + 4-amino-2-methyl-5-(diphosphooxymethyl)pyrimidine + 2 H(+) = thiamine phosphate + CO2 + diphosphate. It catalyses the reaction 4-methyl-5-(2-phosphooxyethyl)-thiazole + 4-amino-2-methyl-5-(diphosphooxymethyl)pyrimidine + H(+) = thiamine phosphate + diphosphate. It functions in the pathway cofactor biosynthesis; thiamine diphosphate biosynthesis; thiamine phosphate from 4-amino-2-methyl-5-diphosphomethylpyrimidine and 4-methyl-5-(2-phosphoethyl)-thiazole: step 1/1. Condenses 4-methyl-5-(beta-hydroxyethyl)thiazole monophosphate (THZ-P) and 2-methyl-4-amino-5-hydroxymethyl pyrimidine pyrophosphate (HMP-PP) to form thiamine monophosphate (TMP). This Clostridium tetani (strain Massachusetts / E88) protein is Thiamine-phosphate synthase.